Here is a 326-residue protein sequence, read N- to C-terminus: Olfactory receptor 11H12 (326 aa).

Over 1–44 (MCPLTLQVTGLMNVSEPNSSFAFVNEFILQGFTCEWTIQIFLFS) the chain is Extracellular. N-linked (GlcNAc...) asparagine glycosylation is found at N13 and N18. A helical membrane pass occupies residues 45–65 (LFTTTYALTITGNGAIAFVLW). The Cytoplasmic portion of the chain corresponds to 66–72 (CDWRLHT). The helical transmembrane segment at 73–93 (PMYMFLGNFSFLEIWYVSSTV) threads the bilayer. At 94–112 (PKMLVNFLSEKKNISFAGC) the chain is on the extracellular side. N-linked (GlcNAc...) asparagine glycosylation is present at N106. The cysteines at positions 112 and 194 are disulfide-linked. Residues 113-133 (FLQFYFFFSLGTSECLLLTVM) form a helical membrane-spanning segment. The Cytoplasmic segment spans residues 134 to 158 (AFDQYLAICRPLLYPNIMTGHLCAK). A helical transmembrane segment spans residues 159-179 (LVILCWVCGFLWFLIPIVLIS). Residues 180–216 (QMPFCGPNIIDHVVCDPGPRFALDCVSAPRIQLFCYT) lie on the Extracellular side of the membrane. A helical membrane pass occupies residues 217–237 (LSSLVIFGNFLFIIGSYTLVL). Residues 238-259 (KAVLGMPSSTGRHKAFSTCGSH) lie on the Cytoplasmic side of the membrane. The helical transmembrane segment at 260-280 (LAVVSLCYSSLMVMYVSPGLG) threads the bilayer. At 281–287 (HSTGMQK) the chain is on the extracellular side. The helical transmembrane segment at 288–308 (IETLFYAMVTPLFNPLIYSLQ) threads the bilayer. The Cytoplasmic segment spans residues 309–326 (NKEIKAALRKVLGSSNII).

This sequence belongs to the G-protein coupled receptor 1 family.

It localises to the cell membrane. In terms of biological role, odorant receptor. The polypeptide is Olfactory receptor 11H12 (OR11H12) (Homo sapiens (Human)).